Consider the following 491-residue polypeptide: PE-PGRS family protein PE_PGRS26 (491 aa).

Residues 1 to 93 form the PE domain; sequence MSNVMVVPGM…VGSYAAAEAA (93 aa). 2 stretches are compositionally biased toward gly residues: residues 207 to 221 and 229 to 238; these read NGGT…GGGL and GGNGGGGDAG. Disordered stretches follow at residues 207–238, 255–275, and 444–491; these read NGGT…GDAG, DGGA…ARGG, and AGGN…GKHG. Over residues 444–485 the composition is skewed to gly residues; the sequence is AGGNGGDGGPSQGGGNPGFGGDGGTGGPGGVGVPDGIGGANG.

It belongs to the mycobacterial PE family. PGRS subfamily.

It is found in the cell surface. The sequence is that of PE-PGRS family protein PE_PGRS26 from Mycobacterium tuberculosis (strain ATCC 25618 / H37Rv).